A 612-amino-acid polypeptide reads, in one-letter code: MDDHKPIETPDGPAVDTPGIGARRYETPPTELPITEAEAARAAGLAHNEHLKIASGYLRGGLADGLLKHATGAISEDDGQLVKFHGMYMQDDRDIRAERTKKKLEKAYSFMIRLRIAGGVVTPKQWLILDNIATTYAGSALRATTRQTFQYHGVIKSNLKRTMAAIDSALLDTIAACGDVNRNVMAATNPAQAGAHKIALQLAKDISDTLLPKTGAWREIWLDGERVVGGEDAAEVEPVYGKTYLPRKFKTVVAVPPSNEVDIFAHDLGFIAILDKKNRVTGWNVTVGGGMGMTHGESDTFPRTADVLGFVQPEDALKAAEAVMTVQRDWGNRKNRKNARLKYTIERFGLDAFRAEVEKRIGKKLGAPKPFTFDGNGDRYGWVEGEDGRHHLTLYVPSGRIKDIEGGPQFLSGLRRIAEVHEGDFRLTGNQNVIIANVPAGKRAEIDALVDEYGLTRGASALRRNSMACVALPTCGLALAESERYLPDLLSELEESLARHGLQDEPITIRSTGCPNGCARPFISEIGLVGRGPERYHLYLGAAFDGSRLSKLYREDVTASEIKGTLDPLFAAYAKDRQPGEHFGDFVIRAGFVAKTSNGPDFHERTGPLRAA.

The segment at 1–26 (MDDHKPIETPDGPAVDTPGIGARRYE) is disordered. [4Fe-4S] cluster is bound by residues cysteine 469, cysteine 475, cysteine 514, and cysteine 518. Position 518 (cysteine 518) interacts with siroheme.

The protein belongs to the nitrite and sulfite reductase 4Fe-4S domain family. As to quaternary structure, alpha(8)-beta(8). The alpha component is a flavoprotein, the beta component is a hemoprotein. Siroheme is required as a cofactor. [4Fe-4S] cluster serves as cofactor.

It carries out the reaction hydrogen sulfide + 3 NADP(+) + 3 H2O = sulfite + 3 NADPH + 4 H(+). It participates in sulfur metabolism; hydrogen sulfide biosynthesis; hydrogen sulfide from sulfite (NADPH route): step 1/1. In terms of biological role, component of the sulfite reductase complex that catalyzes the 6-electron reduction of sulfite to sulfide. This is one of several activities required for the biosynthesis of L-cysteine from sulfate. The protein is Sulfite reductase [NADPH] hemoprotein beta-component of Methylorubrum extorquens (strain ATCC 14718 / DSM 1338 / JCM 2805 / NCIMB 9133 / AM1) (Methylobacterium extorquens).